The primary structure comprises 233 residues: tRNA (guanine-N(1)-)-methyltransferase (233 aa).

Residues glycine 113 and 133 to 138 (IGDYVL) each bind S-adenosyl-L-methionine.

This sequence belongs to the RNA methyltransferase TrmD family. As to quaternary structure, homodimer.

The protein localises to the cytoplasm. It carries out the reaction guanosine(37) in tRNA + S-adenosyl-L-methionine = N(1)-methylguanosine(37) in tRNA + S-adenosyl-L-homocysteine + H(+). Specifically methylates guanosine-37 in various tRNAs. The sequence is that of tRNA (guanine-N(1)-)-methyltransferase from Ruminiclostridium cellulolyticum (strain ATCC 35319 / DSM 5812 / JCM 6584 / H10) (Clostridium cellulolyticum).